The following is a 213-amino-acid chain: G2/mitotic-specific cyclin-1 (213 aa).

The tract at residues Met-1 to Arg-23 is disordered.

Belongs to the cyclin family. Cyclin AB subfamily. In terms of assembly, interacts with the CDC2 protein kinase to form a serine/threonine kinase holoenzyme complex also known as maturation promoting factor (MPF). The cyclin subunit imparts substrate specificity to the complex. As to expression, only expressed in organs with dividing cells.

Functionally, essential for the control of the cell cycle at the G2/M (mitosis) transition. The polypeptide is G2/mitotic-specific cyclin-1 (Medicago sativa (Alfalfa)).